Reading from the N-terminus, the 148-residue chain is Large ribosomal subunit protein uL13 (148 aa).

It belongs to the universal ribosomal protein uL13 family. As to quaternary structure, part of the 50S ribosomal subunit.

Its function is as follows. This protein is one of the early assembly proteins of the 50S ribosomal subunit, although it is not seen to bind rRNA by itself. It is important during the early stages of 50S assembly. In Ureaplasma parvum serovar 3 (strain ATCC 27815 / 27 / NCTC 11736), this protein is Large ribosomal subunit protein uL13.